The chain runs to 309 residues: Protease HtpX homolog (309 aa).

2 helical membrane-spanning segments follow: residues 15–35 (NAVL…VDVI) and 54–74 (IFPT…VVCI). A Zn(2+)-binding site is contributed by H165. Residue E166 is part of the active site. Residue H169 coordinates Zn(2+). Helical transmembrane passes span 181–201 (VGIL…FFMG) and 213–233 (MILL…QMYL). E238 contacts Zn(2+).

Belongs to the peptidase M48B family. Zn(2+) is required as a cofactor.

It is found in the cell inner membrane. The polypeptide is Protease HtpX homolog (Helicobacter acinonychis (strain Sheeba)).